A 343-amino-acid polypeptide reads, in one-letter code: UDP-3-O-acylglucosamine N-acyltransferase 2 (343 aa).

The Proton acceptor role is filled by His251.

It belongs to the transferase hexapeptide repeat family. LpxD subfamily. In terms of assembly, homotrimer.

It catalyses the reaction a UDP-3-O-[(3R)-3-hydroxyacyl]-alpha-D-glucosamine + a (3R)-hydroxyacyl-[ACP] = a UDP-2-N,3-O-bis[(3R)-3-hydroxyacyl]-alpha-D-glucosamine + holo-[ACP] + H(+). Its pathway is bacterial outer membrane biogenesis; LPS lipid A biosynthesis. Functionally, catalyzes the N-acylation of UDP-3-O-acylglucosamine using 3-hydroxyacyl-ACP as the acyl donor. Is involved in the biosynthesis of lipid A, a phosphorylated glycolipid that anchors the lipopolysaccharide to the outer membrane of the cell. The polypeptide is UDP-3-O-acylglucosamine N-acyltransferase 2 (Legionella pneumophila (strain Lens)).